The sequence spans 2273 residues: Retinal-specific phospholipid-transporting ATPase ABCA4 (2273 aa).

At 1 to 21 (MGFVRQIQLLLWKNWTLRKRQ) the chain is on the cytoplasmic side. Residues 22–42 (KIRFVVELVWPLSLFLVLIWL) traverse the membrane as a helical segment. Over 43–646 (RNANPLYSHH…MPYPCFVDDS (604 aa)) the chain is Extracellular. 2 cysteine pairs are disulfide-bonded: cysteine 54–cysteine 81 and cysteine 75–cysteine 324. Asparagine 98 carries an N-linked (GlcNAc...) asparagine glycan. Serine 336 and asparagine 338 together coordinate Mg(2+). A disulfide bridge links cysteine 370 with cysteine 519. Residues asparagine 415, asparagine 444, and asparagine 504 are each glycosylated (N-linked (GlcNAc...) asparagine). 2 residues coordinate an N-all-trans-retinylidenephosphatidylethanolamine: arginine 587 and arginine 653. 3 cysteine pairs are disulfide-bonded: cysteine 641–cysteine 1490, cysteine 1444–cysteine 1455, and cysteine 1488–cysteine 1502. A helical membrane pass occupies residues 647–667 (FMIILNRCFPIFMVLAWIYSV). The Cytoplasmic segment spans residues 668–699 (SMTVKSIVLEKELRLKETLKNQGVSNAVIWCT). Residues 700–720 (WFLDSFSIMSMSIFLLTIFIM) form a helical membrane-spanning segment. Over 721-730 (HGRILHYSDP) the chain is Extracellular. The helical transmembrane segment at 731–751 (FILFLFLLAFSTATIMLCFLL) threads the bilayer. The Cytoplasmic segment spans residues 752–759 (STFFSKAS). Residues 760-780 (LAAACSGVIYFTLYLPHILCF) form a helical membrane-spanning segment. At 781–835 (AWQDRMTAELKKAVSLLSPVAFGFGTEYLVRFEEQGLGLQWSNIGNSPTEGDEFS) the chain is on the extracellular side. Residues 836–856 (FLLSMQMMLLDAAVYGLLAWY) form a helical membrane-spanning segment. Over 857–1376 (LDQVFPGDYG…IRSHKDFLAQ (520 aa)) the chain is Cytoplasmic. Positions 891–911 (ERALEKTEPLTEETEDPEHPE) are disordered. Threonine 901 bears the Phosphothreonine mark. The ABC transporter 1 domain maps to 929–1160 (VCVKNLVKIF…FGTGLYLTLV (232 aa)). ATP contacts are provided by phenylalanine 938, glycine 966, and lysine 969. Mg(2+) is bound at residue threonine 970. ATP is bound by residues threonine 971, glutamine 1010, lysine 1054, glycine 1064, glycine 1065, and histidine 1118. Residue serine 1185 is modified to Phosphoserine. The interval 1284-1345 (PLFAGGAQQK…EPECPGPQLN (62 aa)) is disordered. Threonine 1313 carries the phosphothreonine modification. The residue at position 1317 (serine 1317) is a Phosphoserine. A compositionally biased stretch (pro residues) spans 1331–1340 (GQPPPEPECP). A helical transmembrane segment spans residues 1377-1397 (IVLPATFVFLALMLSIVIPPF). Residues 1398 to 1727 (GEYPALTLHP…VSPTTYWVTN (330 aa)) lie on the Extracellular side of the membrane. The N-linked (GlcNAc...) asparagine glycan is linked to asparagine 1469. N-linked (GlcNAc...) asparagine glycosylation is found at asparagine 1529, asparagine 1588, and asparagine 1662. Residues 1728–1748 (FLWDIMNYSVSAGLVVGIFIG) traverse the membrane as a helical segment. Topologically, residues 1749–1759 (FQKKAYTSPEN) are cytoplasmic. The helical transmembrane segment at 1760–1780 (LPALVALLLLYGWAVIPMMYP) threads the bilayer. Over 1781-1792 (ASFLFDVPSTAY) the chain is Extracellular. The chain crosses the membrane as a helical span at residues 1793–1813 (VALSCANLFIGINSSAITFIL). Residues 1814-1831 (ELFENNRTLLRFNAVLRK) lie on the Cytoplasmic side of the membrane. A helical transmembrane segment spans residues 1832 to 1852 (LLIVFPHFCLGRGLIDLALSQ). The Extracellular portion of the chain corresponds to 1853 to 1873 (AVTDVYARFGEEHSANPFHWD). A helical membrane pass occupies residues 1874–1894 (LIGKNLFAMVVEGVVYFLLTL). Residues 1895-2273 (LVQRHFFLSQ…AAGASRQAQD (379 aa)) lie on the Cytoplasmic side of the membrane. Positions 1938-2170 (LRLHELTKIY…FGDGYIVTMK (233 aa)) constitute an ABC transporter 2 domain. 6 residues coordinate ATP: asparagine 1974, glycine 1975, lysine 1978, threonine 1979, threonine 1980, and glycine 2073. Residue threonine 1979 participates in Mg(2+) binding. The interval 2244–2249 (VFVNFA) is essential for ATP binding and ATPase activity.

Belongs to the ABC transporter superfamily. ABCA family. In terms of processing, proteolytic cleavage by trypsin leads to a 120-kDa N-terminal fragment and a 115-kDa C-terminal fragment that are linked through disulfide bonds. N-glycosylated. Post-translationally, phosphorylation is independent of light exposure and modulates ATPase activity. As to expression, retinal-specific. Seems to be exclusively found in the rims of rod photoreceptor cells.

It is found in the membrane. The protein resides in the endoplasmic reticulum. It localises to the cytoplasmic vesicle. Its subcellular location is the cell projection. The protein localises to the cilium. It is found in the photoreceptor outer segment. The catalysed reaction is an N-all-trans-retinylidenephosphatidylethanolamine(out) + ATP + H2O = an N-all-trans-retinylidenephosphatidylethanolamine(in) + ADP + phosphate + H(+). It carries out the reaction ATP + H2O + phospholipidSide 1 = ADP + phosphate + phospholipidSide 2.. The enzyme catalyses a 1,2-diacyl-sn-glycero-3-phosphoethanolamine(out) + ATP + H2O = a 1,2-diacyl-sn-glycero-3-phosphoethanolamine(in) + ADP + phosphate + H(+). It catalyses the reaction N-11-cis-retinylidenephosphatidylethanolamine(out) + ATP + H2O = N-11-cis-retinylidenephosphatidylethanolamine(in) + ADP + phosphate + H(+). The catalysed reaction is ATP + H2O = ADP + phosphate + H(+). ATPase activity is decreased by cholesterol and ceramide. Phospholipids translocase activity is highly reduced by berylium fluoride and aluminum floride. N-ethylmaleimide inhibits phospholipid translocase activity. Its function is as follows. Flippase that catalyzes in an ATP-dependent manner the transport of retinal-phosphatidylethanolamine conjugates like 11-cis and all-trans isomers of N-retinylidene-phosphatidylethanolamine (N-Ret-PE) from the lumen to the cytoplasmic leaflet of photoreceptor outer segment disk membranes, where 11-cis-retinylidene-phosphatidylethanolamine is then isomerized to its all-trans isomer and reduced by RDH8 to produce all-trans-retinol. This transport activity ensures that all-trans-retinal generated from photoexcitation and 11-cis-retinal not needed for the regeneration of rhodopsin and cone opsins are effectively cleared from the photoreceptors, therefore preventing their accumulation and the formation of toxic bisretinoid. Displays ATPase activity in vitro in absence of retinal substrate. May display GTPase activity that is strongly influenced by the lipid environment and the presence of retinoid compounds. Binds the unprotonated form of N-retinylidene-phosphatidylethanolamine with high affinity in the absence of ATP, and ATP binding and hydrolysis induce a protein conformational change that causes N-retinylidene-phosphatidylethanolamine release. This chain is Retinal-specific phospholipid-transporting ATPase ABCA4, found in Homo sapiens (Human).